A 238-amino-acid chain; its full sequence is Ribonuclease 3 (238 aa).

One can recognise an RNase III domain in the interval 8–135 (VAELERRIGY…LIAALYIDGG (128 aa)). A Mg(2+)-binding site is contributed by E48. D52 is an active-site residue. Mg(2+)-binding residues include D121 and E124. E124 is a catalytic residue. The DRBM domain maps to 161-230 (DPKTQLQEWV…AQCMLLKREG (70 aa)).

The protein belongs to the ribonuclease III family. As to quaternary structure, homodimer. The cofactor is Mg(2+).

The protein localises to the cytoplasm. The enzyme catalyses Endonucleolytic cleavage to 5'-phosphomonoester.. Functionally, digests double-stranded RNA. Involved in the processing of primary rRNA transcript to yield the immediate precursors to the large and small rRNAs (23S and 16S). Processes some mRNAs, and tRNAs when they are encoded in the rRNA operon. Processes pre-crRNA and tracrRNA of type II CRISPR loci if present in the organism. This Phenylobacterium zucineum (strain HLK1) protein is Ribonuclease 3.